Here is a 506-residue protein sequence, read N- to C-terminus: UDP-N-acetylglucosamine--peptide N-acetylglucosaminyltransferase GtfA subunit (506 aa).

The tract at residues methionine 1 to threonine 78 is N-terminus R-fold-1. Glycine 16–tyrosine 19 contributes to the UDP binding site. The tract at residues valine 79–tyrosine 195 is extended beta-sheet domain. Residues serine 196–glycine 306 are C-terminus R-fold-1. Histidine 242 is a binding site for N-acetyl-D-glucosamine. The interval serine 307–leucine 506 is R-fold-2. UDP-binding positions include arginine 328, tyrosine 357, and glycine 383 to alanine 385. Residue glycine 405 to glycine 407 coordinates N-acetyl-D-glucosamine. Threonine 409 is a binding site for UDP.

Belongs to the glycosyltransferase group 1 family. Glycosyltransferase 4 subfamily. In terms of assembly, forms a heterotetramer with 2 subunits each of GtfA and GtfB. Part of the accessory SecA2/SecY2 protein translocation apparatus required to export cell wall protein GspB.

Its subcellular location is the cytoplasm. It is found in the cell membrane. It catalyses the reaction L-seryl-[protein] + UDP-N-acetyl-alpha-D-glucosamine = 3-O-[N-acetyl-alpha-D-glucosaminyl]-L-seryl-[protein] + UDP + H(+). Its pathway is protein modification; protein glycosylation. Its function is as follows. Required for polymorphic O-glycosylation of GspB, a serine-rich repeat cell wall protein encoded upstream in the same operon. Catalyzes the first step in glycosylation by transferring N-acetylglucosamine from UDP-GlcNAc to serine residues in GspB. Part of the accessory SecA2/SecY2 system specifically required to export GspB. Upon coexpression in E.coli with GtfB glycosylates GspB constructs. Glycosylation probably occurs intracellularly. Requires GtfB for glycosylation activity, it has no activity alone. Does not use UDP-glucose as substrate. Has a fast, probably processive glycosylation phase followed by a slower, non-processive phase. The enzyme probably modifies its tertiary conformation by opening and closing its intersubunit interfaces to accomodate the increasingly glycosylated substrate; protein substrate recognition is provided by GtfB. This is UDP-N-acetylglucosamine--peptide N-acetylglucosaminyltransferase GtfA subunit from Streptococcus gordonii.